Here is a 929-residue protein sequence, read N- to C-terminus: LPS-assembly protein LptD (929 aa).

An N-terminal signal peptide occupies residues 1 to 24 (MKLRFIRSAGWLFLLFCLACNARA). The tract at residues 26–208 (LPPLSSKPEQ…EAGDEKLRLA (183 aa)) is disordered. A compositionally biased stretch (basic and acidic residues) spans 44-74 (GDDKPVVIDTERIRGHHEYESGTRSESELRS). The segment covering 154–164 (RTQSAPRTLSA) has biased composition (polar residues). The segment covering 181-208 (DQDRPGFAEGERIGGHREEAGDEKLRLA) has biased composition (basic and acidic residues).

This sequence belongs to the LptD family. As to quaternary structure, component of the lipopolysaccharide transport and assembly complex. Interacts with LptE and LptA.

It localises to the cell outer membrane. Functionally, together with LptE, is involved in the assembly of lipopolysaccharide (LPS) at the surface of the outer membrane. This chain is LPS-assembly protein LptD, found in Nitrosospira multiformis (strain ATCC 25196 / NCIMB 11849 / C 71).